A 105-amino-acid polypeptide reads, in one-letter code: Protein ORFg in retron Ec67 (105 aa).

This Escherichia coli protein is Protein ORFg in retron Ec67.